The primary structure comprises 164 residues: Lipoprotein signal peptidase (164 aa).

3 helical membrane passes run 12 to 32 (WLWL…LILQ), 70 to 90 (WFFA…MYRS), and 102 to 122 (ALII…GFVV). Active-site residues include Asp123 and Asp141. Residues 137 to 157 (FNLADTAICVGAALIVLEGFL) traverse the membrane as a helical segment.

Belongs to the peptidase A8 family.

It is found in the cell inner membrane. It carries out the reaction Release of signal peptides from bacterial membrane prolipoproteins. Hydrolyzes -Xaa-Yaa-Zaa-|-(S,diacylglyceryl)Cys-, in which Xaa is hydrophobic (preferably Leu), and Yaa (Ala or Ser) and Zaa (Gly or Ala) have small, neutral side chains.. It functions in the pathway protein modification; lipoprotein biosynthesis (signal peptide cleavage). Functionally, this protein specifically catalyzes the removal of signal peptides from prolipoproteins. The chain is Lipoprotein signal peptidase from Escherichia coli O9:H4 (strain HS).